Consider the following 1621-residue polypeptide: ALK tyrosine kinase receptor (1621 aa).

An N-terminal signal peptide occupies residues 1–18 (MGAAGFLWLLPPLLLAAA). Topologically, residues 19 to 1042 (SYSGAATDQR…PHLPLSLILS (1024 aa)) are extracellular. Positions 48 to 70 (RLQRKSLAVDFVVPSLFRVYARD) are heparin-binding region. N-linked (GlcNAc...) asparagine glycosylation is found at N174, N248, N289, N328, N415, N428, N449, N567, N575, N631, and N673. The 164-residue stretch at 268-431 (LECSFDFPCE…DFFALKNCSE (164 aa)) folds into the MAM 1 domain. The region spanning 441–477 (LQSSFTCWNGTVLQLGQACDFHQDCAQGEDEGQLCSK) is the LDL-receptor class A domain. One can recognise an MAM 2 domain in the interval 482–640 (FYCNFENGFC…NISISLDCYL (159 aa)). Residues C692 and C705 are joined by a disulfide bond. N713 is a glycosylation site (N-linked (GlcNAc...) asparagine). A disulfide bond links C787 and C798. N812, N868, and N890 each carry an N-linked (GlcNAc...) asparagine glycan. A disulfide bond links C910 and C932. A glycan (N-linked (GlcNAc...) asparagine) is linked at N990. 3 cysteine pairs are disulfide-bonded: C991-C999, C994-C1010, and C1012-C1025. The segment at 991–1029 (CSHCEVDECHMDPESHKVICFCDHGTVLADDGVSCIVSP) is EGF-like. The chain crosses the membrane as a helical span at residues 1043–1063 (VVTSALVAALVLAFSGIMIVY). Residues 1064–1621 (RRKHQELQAM…SKNKVTQPGP (558 aa)) are Cytoplasmic-facing. Y1082, Y1096, and Y1100 each carry phosphotyrosine. A Protein kinase domain is found at 1120–1396 (ITLIRGLGHG…IEYCTQDPDV (277 aa)). Residues 1126-1134 (LGHGAFGEV) and H1128 contribute to the ATP site. The residue at position 1135 (Y1135) is a Phosphotyrosine. Residues K1154 and 1201–1203 (ELM) each bind ATP. D1253 serves as the catalytic Proton acceptor. D1274 lines the ATP pocket. Position 1282 is a phosphotyrosine (Y1282). The tract at residues 1412–1556 (EEKVPMRPKD…WTGPGAGPRR (145 aa)) is disordered. The span at 1414–1423 (KVPMRPKDPE) shows a compositional bias: basic and acidic residues. The span at 1441 to 1461 (SAAPQPAALTAPGPSVKKPPG) shows a compositional bias: low complexity. The span at 1462-1472 (AGAGAGAGAGA) shows a compositional bias: gly residues. A compositionally biased stretch (polar residues) spans 1506-1518 (NKPTSLWNPTYGS). A Phosphotyrosine modification is found at Y1516. The span at 1543 to 1552 (AEGGWTGPGA) shows a compositional bias: gly residues.

This sequence belongs to the protein kinase superfamily. Tyr protein kinase family. Insulin receptor subfamily. Homodimer; homodimerizes following heparin- and ligand-binding. Interacts with CBL, IRS1, PIK3R1 and PLCG1. Interacts with FRS2 and SHC1. Interacts with PTN and MDK. Post-translationally, phosphorylated at tyrosine residues by autocatalysis, which activates kinase activity. In cells not stimulated by a ligand, receptor protein tyrosine phosphatase beta and zeta complex (PTPRB/PTPRZ1) dephosphorylates ALK at the sites in ALK that are undergoing autophosphorylation through autoactivation. As to expression, mainly expressed in central nervous system (CNS) and other parts of the brain such as the paraventricular nucleus (PVN) of the hypothalamus. Expression is also found in peripheral nervous systems, eye, nasal epithelium, olfactory nerve, tongue, skin, tissue surrounding the esophagus, stomach, midgut, as well as testis and ovary.

It localises to the cell membrane. It catalyses the reaction L-tyrosyl-[protein] + ATP = O-phospho-L-tyrosyl-[protein] + ADP + H(+). With respect to regulation, activated upon ALKAL2 ligand-binding. ALKAL2-driven activation is coupled with heparin-binding. Following ligand-binding, homodimerizes and autophosphorylates, activating its kinase activity. Inactivated through dephosphorylation by receptor protein tyrosine phosphatase beta and zeta complex (PTPRB/PTPRZ1) when there is no stimulation by a ligand. Functionally, neuronal receptor tyrosine kinase that is essentially and transiently expressed in specific regions of the central and peripheral nervous systems and plays an important role in the genesis and differentiation of the nervous system. Also acts as a key thinness protein involved in the resistance to weight gain: in hypothalamic neurons, controls energy expenditure acting as a negative regulator of white adipose tissue lipolysis and sympathetic tone to fine-tune energy homeostasis. Following activation by ALKAL2 ligand at the cell surface, transduces an extracellular signal into an intracellular response. In contrast, ALKAL1 is not a potent physiological ligand for ALK. Ligand-binding to the extracellular domain induces tyrosine kinase activation, leading to activation of the mitogen-activated protein kinase (MAPK) pathway. Phosphorylates almost exclusively at the first tyrosine of the Y-x-x-x-Y-Y motif. Induces tyrosine phosphorylation of CBL, FRS2, IRS1 and SHC1, as well as of the MAP kinases MAPK1/ERK2 and MAPK3/ERK1. ALK activation may also be regulated by pleiotrophin (PTN) and midkine (MDK). PTN-binding induces MAPK pathway activation, which is important for the anti-apoptotic signaling of PTN and regulation of cell proliferation. MDK-binding induces phosphorylation of the ALK target insulin receptor substrate (IRS1), activates mitogen-activated protein kinases (MAPKs) and PI3-kinase, resulting also in cell proliferation induction. Drives NF-kappa-B activation, probably through IRS1 and the activation of the AKT serine/threonine kinase. Recruitment of IRS1 to activated ALK and the activation of NF-kappa-B are essential for the autocrine growth and survival signaling of MDK. This is ALK tyrosine kinase receptor from Mus musculus (Mouse).